The following is a 255-amino-acid chain: Triosephosphate isomerase (255 aa).

A substrate-binding site is contributed by 9-11 (NWK). Histidine 95 functions as the Electrophile in the catalytic mechanism. Glutamate 167 functions as the Proton acceptor in the catalytic mechanism. Substrate-binding positions include glycine 173, serine 212, and 233–234 (GG).

This sequence belongs to the triosephosphate isomerase family. In terms of assembly, homodimer.

Its subcellular location is the cytoplasm. The catalysed reaction is D-glyceraldehyde 3-phosphate = dihydroxyacetone phosphate. It participates in carbohydrate biosynthesis; gluconeogenesis. It functions in the pathway carbohydrate degradation; glycolysis; D-glyceraldehyde 3-phosphate from glycerone phosphate: step 1/1. In terms of biological role, involved in the gluconeogenesis. Catalyzes stereospecifically the conversion of dihydroxyacetone phosphate (DHAP) to D-glyceraldehyde-3-phosphate (G3P). The polypeptide is Triosephosphate isomerase (Escherichia fergusonii (strain ATCC 35469 / DSM 13698 / CCUG 18766 / IAM 14443 / JCM 21226 / LMG 7866 / NBRC 102419 / NCTC 12128 / CDC 0568-73)).